A 690-amino-acid polypeptide reads, in one-letter code: Protein SPT2 homolog (690 aa).

Residues 1–579 form an important for interaction with DNA region; the sequence is MDFHNILVMA…PGHRPVFRPQ (579 aa). Residues 40–82 are a coiled coil; that stretch reads ESAAVQAFLRRKEEEKRKKELEEKRKKERLLAKRIELKHDRKA. 2 disordered regions span residues 105–167 and 186–619; these read PKKR…APAP and EIKV…QEEI. Residues 186 to 228 show a composition bias toward basic and acidic residues; that stretch reads EIKVVKKIEERPRTAEELREREYLERKNKRVETQKKKSEKEVK. Over residues 229-243 the composition is skewed to low complexity; the sequence is SAGISSSSKKATSLK. Basic and acidic residues-rich tracts occupy residues 244 to 259 and 271 to 285; these read ECADAKLSRSAADKHA and TDKKPKAPALTEKHS. A compositionally biased stretch (polar residues) spans 369–380; that stretch reads HETNSSAKRPSS. Residues 383–396 show a composition bias toward gly residues; sequence GKGGSGHPAGGSSA. Residues 397-442 are compositionally biased toward low complexity; the sequence is GPGRSSSNSGTGPGRPGSVSSPGPGRQGSSSAAGPGRPSSSSSLGP. Gly residues-rich tracts occupy residues 443 to 457, 465 to 477, and 489 to 521; these read GRLGSGSGVGPGRPG, GRPGGSSGTGPGR, and LGSGMGTGPGRPGVGPSAGPGRPGSSSGTGPGR. The span at 545-565 shows a compositional bias: polar residues; it reads VSETISSKNLVTRPSNGQING. The tract at residues 580-690 is important for interaction with histones; that stretch reads GIGRPPVGYK…KRQSKKLRTR (111 aa). The span at 593 to 617 shows a compositional bias: acidic residues; that stretch reads DDDDDDDEYDSEMDDFIEDEGEPQE. Residues 650–690 are a coiled coil; the sequence is REQQKEEARSLRLGVQEDLEELRREEEELKRKRQSKKLRTR.

Belongs to the SPT2 family. Interacts with POLR1A. Interacts with histones. Interacts with a heterotetrameric complex formed by histone H3 and H4, especially when the histone tetramer is not bound to DNA.

Its subcellular location is the nucleus. It localises to the nucleolus. Its function is as follows. Histone chaperone that stabilizes pre-existing histone tetramers and regulates replication-independent histone exchange on chromatin. Required for normal chromatin refolding in the coding region of transcribed genes, and for the suppression of spurious transcription. Binds DNA and histones and promotes nucleosome assembly (in vitro). Modulates RNA polymerase 1-mediated transcription. Required for optimal growth in the presence of the DNA damaging agents actinomycin D or mitomycin C (in vitro). Facilitates formation of tetrameric histone complexes containing histone H3 and H4. Modulates RNA polymerase 1-mediated transcription. Binds DNA, with a preference for branched DNA species, such as Y-form DNA and Holliday junction DNA. This Gallus gallus (Chicken) protein is Protein SPT2 homolog (SPTY2D1).